A 225-amino-acid chain; its full sequence is Enolase-phosphatase E1 (225 aa).

The protein belongs to the HAD-like hydrolase superfamily. MasA/MtnC family. In terms of assembly, monomer. It depends on Mg(2+) as a cofactor.

The enzyme catalyses 5-methylsulfanyl-2,3-dioxopentyl phosphate + H2O = 1,2-dihydroxy-5-(methylsulfanyl)pent-1-en-3-one + phosphate. It participates in amino-acid biosynthesis; L-methionine biosynthesis via salvage pathway; L-methionine from S-methyl-5-thio-alpha-D-ribose 1-phosphate: step 3/6. It functions in the pathway amino-acid biosynthesis; L-methionine biosynthesis via salvage pathway; L-methionine from S-methyl-5-thio-alpha-D-ribose 1-phosphate: step 4/6. Its function is as follows. Bifunctional enzyme that catalyzes the enolization of 2,3-diketo-5-methylthiopentyl-1-phosphate (DK-MTP-1-P) into the intermediate 2-hydroxy-3-keto-5-methylthiopentenyl-1-phosphate (HK-MTPenyl-1-P), which is then dephosphorylated to form the acireductone 1,2-dihydroxy-3-keto-5-methylthiopentene (DHK-MTPene). In Shewanella halifaxensis (strain HAW-EB4), this protein is Enolase-phosphatase E1.